A 346-amino-acid polypeptide reads, in one-letter code: D-alanine--D-alanine ligase (346 aa).

Positions 133 to 327 constitute an ATP-grasp domain; the sequence is KLYAKSVGVK…ALADQISLEK (195 aa). 159–211 contributes to the ATP binding site; the sequence is LSFPCIIKPARLGSSIGISIVKDEKDLEYAKDVGFEFDNDLVVEEFKNNIKEY. Mg(2+)-binding residues include D284, E296, and N298.

This sequence belongs to the D-alanine--D-alanine ligase family. Mg(2+) is required as a cofactor. It depends on Mn(2+) as a cofactor.

Its subcellular location is the cytoplasm. The enzyme catalyses 2 D-alanine + ATP = D-alanyl-D-alanine + ADP + phosphate + H(+). Its pathway is cell wall biogenesis; peptidoglycan biosynthesis. Its function is as follows. Cell wall formation. This chain is D-alanine--D-alanine ligase, found in Campylobacter jejuni subsp. jejuni serotype O:6 (strain 81116 / NCTC 11828).